Reading from the N-terminus, the 142-residue chain is MKPRLLNSFRGYRYRYRYRYGYRRKKPEIRNIDKGIIHILASFNNTIITVTDVKGHVIYWSSAGACGFKGPKKGSAFAAQKATESVIYRVVIKRAAVLITGCGKGRDAALRVIQHNRIPIRAVVDITPNPHNGCRPPAKRRV.

This sequence belongs to the universal ribosomal protein uS11 family. As to quaternary structure, part of the 30S ribosomal subunit.

Its subcellular location is the plastid. The protein localises to the chloroplast. The sequence is that of Small ribosomal subunit protein uS11c from Welwitschia mirabilis (Tree tumbo).